We begin with the raw amino-acid sequence, 235 residues long: Urease accessory protein UreF (235 aa).

The protein belongs to the UreF family. UreD, UreF and UreG form a complex that acts as a GTP-hydrolysis-dependent molecular chaperone, activating the urease apoprotein by helping to assemble the nickel containing metallocenter of UreC. The UreE protein probably delivers the nickel.

The protein localises to the cytoplasm. In terms of biological role, required for maturation of urease via the functional incorporation of the urease nickel metallocenter. This Ureaplasma urealyticum serovar 10 (strain ATCC 33699 / Western) protein is Urease accessory protein UreF.